Reading from the N-terminus, the 446-residue chain is Phosphoglucosamine mutase (446 aa).

Serine 103 (phosphoserine intermediate) is an active-site residue. Residues serine 103, aspartate 242, aspartate 244, and aspartate 246 each contribute to the Mg(2+) site. At serine 103 the chain carries Phosphoserine.

This sequence belongs to the phosphohexose mutase family. The cofactor is Mg(2+). In terms of processing, activated by phosphorylation.

It catalyses the reaction alpha-D-glucosamine 1-phosphate = D-glucosamine 6-phosphate. Its function is as follows. Catalyzes the conversion of glucosamine-6-phosphate to glucosamine-1-phosphate. The protein is Phosphoglucosamine mutase of Vibrio campbellii (strain ATCC BAA-1116).